A 597-amino-acid chain; its full sequence is Aspartate--tRNA(Asp/Asn) ligase (597 aa).

Glutamate 172 is an L-aspartate binding site. An aspartate region spans residues 196–199 (QLFK). Position 218 (arginine 218) interacts with L-aspartate. Residues 218–220 (RDE) and glutamine 227 contribute to the ATP site. Position 454 (histidine 454) interacts with L-aspartate. An ATP-binding site is contributed by glutamate 488. Residue arginine 495 coordinates L-aspartate. 540–543 (GLDR) lines the ATP pocket.

It belongs to the class-II aminoacyl-tRNA synthetase family. Type 1 subfamily. As to quaternary structure, homodimer.

It localises to the cytoplasm. The catalysed reaction is tRNA(Asx) + L-aspartate + ATP = L-aspartyl-tRNA(Asx) + AMP + diphosphate. Its function is as follows. Aspartyl-tRNA synthetase with relaxed tRNA specificity since it is able to aspartylate not only its cognate tRNA(Asp) but also tRNA(Asn). Reaction proceeds in two steps: L-aspartate is first activated by ATP to form Asp-AMP and then transferred to the acceptor end of tRNA(Asp/Asn). The protein is Aspartate--tRNA(Asp/Asn) ligase of Chromobacterium violaceum (strain ATCC 12472 / DSM 30191 / JCM 1249 / CCUG 213 / NBRC 12614 / NCIMB 9131 / NCTC 9757 / MK).